A 53-amino-acid chain; its full sequence is MGMSLSHLLIVLLIIFVLFGAGKLPQVMSDLAKGLKAFKDGMKDDGSDNDKNK.

Residues 1–21 traverse the membrane as a helical segment; the sequence is MGMSLSHLLIVLLIIFVLFGA.

Belongs to the TatA/E family. The Tat system comprises two distinct complexes: a TatABC complex, containing multiple copies of TatA, TatB and TatC subunits, and a separate TatA complex, containing only TatA subunits. Substrates initially bind to the TatABC complex, which probably triggers association of the separate TatA complex to form the active translocon.

It localises to the cell inner membrane. Its function is as follows. Part of the twin-arginine translocation (Tat) system that transports large folded proteins containing a characteristic twin-arginine motif in their signal peptide across membranes. TatA could form the protein-conducting channel of the Tat system. This Rickettsia conorii (strain ATCC VR-613 / Malish 7) protein is Sec-independent protein translocase protein TatA.